A 304-amino-acid polypeptide reads, in one-letter code: Urease accessory protein UreD 2 (304 aa).

This sequence belongs to the UreD family. UreD, UreF and UreG form a complex that acts as a GTP-hydrolysis-dependent molecular chaperone, activating the urease apoprotein by helping to assemble the nickel containing metallocenter of UreC. The UreE protein probably delivers the nickel.

The protein localises to the cytoplasm. Required for maturation of urease via the functional incorporation of the urease nickel metallocenter. Its function is as follows. Disrupting the ure2 operon has no effect on urease activity or pathogen survival in BALB/c mice when administered orally. This chain is Urease accessory protein UreD 2, found in Brucella abortus (strain 2308).